The sequence spans 312 residues: Polyamine aminopropyltransferase (312 aa).

A PABS domain is found at 7 to 247; that stretch reads FFWVQEYFTP…GPLGFALAAQ (241 aa). Position 36 (Gln36) interacts with S-methyl-5'-thioadenosine. His67 and Glu95 together coordinate spermidine. S-methyl-5'-thioadenosine contacts are provided by residues Asp115 and 147–148; that span reads DA. Residue Asp165 is the Proton acceptor of the active site. Position 174 (Pro174) interacts with S-methyl-5'-thioadenosine.

The protein belongs to the spermidine/spermine synthase family. As to quaternary structure, homodimer or homotetramer.

Its subcellular location is the cytoplasm. The enzyme catalyses S-adenosyl 3-(methylsulfanyl)propylamine + putrescine = S-methyl-5'-thioadenosine + spermidine + H(+). Its pathway is amine and polyamine biosynthesis; spermidine biosynthesis; spermidine from putrescine: step 1/1. In terms of biological role, catalyzes the irreversible transfer of a propylamine group from the amino donor S-adenosylmethioninamine (decarboxy-AdoMet) to putrescine (1,4-diaminobutane) to yield spermidine. The chain is Polyamine aminopropyltransferase from Synechococcus sp. (strain JA-2-3B'a(2-13)) (Cyanobacteria bacterium Yellowstone B-Prime).